The sequence spans 338 residues: Glycerol-3-phosphate dehydrogenase [NAD(P)+] (338 aa).

Positions 13, 14, and 108 each coordinate NADPH. Positions 108, 139, and 141 each coordinate sn-glycerol 3-phosphate. Residue Ala143 coordinates NADPH. Sn-glycerol 3-phosphate is bound by residues Lys194, Asp247, Ser257, Arg258, and Asn259. Residue Lys194 is the Proton acceptor of the active site. NADPH is bound at residue Arg258. 2 residues coordinate NADPH: Val282 and Glu284.

Belongs to the NAD-dependent glycerol-3-phosphate dehydrogenase family.

Its subcellular location is the cytoplasm. It catalyses the reaction sn-glycerol 3-phosphate + NAD(+) = dihydroxyacetone phosphate + NADH + H(+). The enzyme catalyses sn-glycerol 3-phosphate + NADP(+) = dihydroxyacetone phosphate + NADPH + H(+). The protein operates within membrane lipid metabolism; glycerophospholipid metabolism. Its function is as follows. Catalyzes the reduction of the glycolytic intermediate dihydroxyacetone phosphate (DHAP) to sn-glycerol 3-phosphate (G3P), the key precursor for phospholipid synthesis. This chain is Glycerol-3-phosphate dehydrogenase [NAD(P)+], found in Listeria innocua serovar 6a (strain ATCC BAA-680 / CLIP 11262).